Here is a 382-residue protein sequence, read N- to C-terminus: Ribosomal RNA large subunit methyltransferase G (382 aa).

This sequence belongs to the methyltransferase superfamily. RlmG family.

It localises to the cytoplasm. The catalysed reaction is guanosine(1835) in 23S rRNA + S-adenosyl-L-methionine = N(2)-methylguanosine(1835) in 23S rRNA + S-adenosyl-L-homocysteine + H(+). Functionally, specifically methylates the guanine in position 1835 (m2G1835) of 23S rRNA. This is Ribosomal RNA large subunit methyltransferase G from Aliivibrio salmonicida (strain LFI1238) (Vibrio salmonicida (strain LFI1238)).